We begin with the raw amino-acid sequence, 477 residues long: Angiotensinogen (477 aa).

The N-terminal stretch at 1 to 24 (MTPTGAGLKATIFCILTWVSLTAG) is a signal peptide. Residues Cys-42 and Cys-161 are joined by a disulfide bond. N-linked (GlcNAc...) asparagine glycans are attached at residues Asn-295 and Asn-319.

This sequence belongs to the serpin family. In response to low blood pressure, the enzyme renin/REN cleaves angiotensinogen to produce angiotensin-1. Angiotensin-1 is a substrate of ACE (angiotensin converting enzyme) that removes a dipeptide to yield the physiologically active peptide angiotensin-2. Angiotensin-1 and angiotensin-2 can be further processed to generate angiotensin-3, angiotensin-4. Angiotensin 1-9 is cleaved from angiotensin-1 by ACE2 and can be further processed by ACE to produce angiotensin 1-7, angiotensin 1-5 and angiotensin 1-4. Angiotensin 1-7 has also been proposed to be cleaved from angiotensin-2 by ACE2 or from angiotensin-1 by MME (neprilysin). Post-translationally, the disulfide bond is labile. Angiotensinogen is present in the circulation in a near 40:60 ratio with the oxidized disulfide-bonded form, which preferentially interacts with receptor-bound renin.

Its subcellular location is the secreted. Its function is as follows. Essential component of the renin-angiotensin system (RAS), a potent regulator of blood pressure, body fluid and electrolyte homeostasis. Functionally, acts directly on vascular smooth muscle as a potent vasoconstrictor, affects cardiac contractility and heart rate through its action on the sympathetic nervous system, and alters renal sodium and water absorption through its ability to stimulate the zona glomerulosa cells of the adrenal cortex to synthesize and secrete aldosterone. Acts by binding to angiotensin receptors AGTR1 and AGTR2. Also binds the DEAR/FBXW7-AS1 receptor. Stimulates aldosterone release. In terms of biological role, is a ligand for the G-protein coupled receptor MAS1. Has vasodilator and antidiuretic effects. Has an antithrombotic effect that involves MAS1-mediated release of nitric oxide from platelets. The polypeptide is Angiotensinogen (Agt) (Rattus norvegicus (Rat)).